A 148-amino-acid chain; its full sequence is uncharacterized protein (148 aa).

3 helical membrane passes run 25–45 (FCTVGVGNTLIDFGVFFLLTA), 85–105 (IVRFLMINIAASGITFLLLYL), and 118–138 (LAATIGGMMMNFIGNRIWVFG).

It belongs to the GtrA family.

The protein localises to the cell membrane. This is an uncharacterized protein from Bacillus subtilis (strain 168).